The following is a 96-amino-acid chain: MSAITRHGDALVIRLYIQPKASRDQIVGLHGDELKVAITAPPVDGQANAHLTKFLAKQFRVAKSLVVIEKGELGRHKQIRITHPQHIPADVADFIE.

The protein belongs to the UPF0235 family.

The polypeptide is UPF0235 protein PC1_3453 (Pectobacterium carotovorum subsp. carotovorum (strain PC1)).